An 838-amino-acid chain; its full sequence is MANILRTIIENDKGELRKLEKMANKVIAYSDQMAALSDEELKAKTDEFKQRYQNGESLDDLLYEAFAVVREGAKRVLGLYPYPVQIMGGIVLHHGDVPEMRTGEGKTLTATMPVYLNALAGEGVHVVTVNEYLTERDATEMGELYSWLGLSVGINLAAKSPAEKREAYACDITYSTNSEIGFDYLRDNMVVRAENMVQRPLNYALVDEVDSILIDEARTPLIVSGPVSSETNQLYHMADSFVKSLNKDDYIIDVPSKTIGLSDSGIDKAESYFKLDNLYDIENVALTHFIDNALRANYIMILDIDYVVSEEQEILIVDQFTGRTMEGRRYSDGLHQAIEAKEGVPVQDETKTSASITYQNLFRMYKKLSGMTGTAKTEEEEFRETYNIRVIPIPTNRPIARIDHEDLLYPSLESKFKAVVEDVKERHLKGQPVLVGTVAVETSDYLSKKLVAAGIPHEVLNAKNHYREAQIIMNAGQRGAVTIATNMAGRGTDIKLGEGVRELGGLCVIGTERHESRRIDNQLRGRSGRQGDPGESQFYLSLEDELMRRFGSERIKAVLDRFKLSEEESVIKSKMFTRQVEAAQKRVEGNNYDTRKQVLQYDDVMREQREIIYAERHDVITANRDLAPEIHAMIKRTIDRFVDGNSRAPQEEKLDSILYFAKYNLVPEESISLSDLQGLSDEEIKANLYERALEVYNSQIAKLRDEEAVREFQKVLILRVVDNKWTDHIDALDQLRNAVGLRGYAQNNPVVEYQSESFRMFNDMIGSIEFDVTRLMMKAQIHEQERPRTEHNIVTTATRNISAQESDLPADVDLAKVGRNELCPCGSGKKFKNCHGRR.

Residues glutamine 85, 103 to 107 (GEGKT), and aspartate 493 contribute to the ATP site. Zn(2+)-binding residues include cysteine 823, cysteine 825, cysteine 834, and histidine 835.

It belongs to the SecA family. In terms of assembly, monomer and homodimer. Part of the essential Sec protein translocation apparatus which comprises SecA, SecYEG and auxiliary proteins SecDF. Other proteins may also be involved. Zn(2+) is required as a cofactor.

Its subcellular location is the cell membrane. It is found in the cytoplasm. The enzyme catalyses ATP + H2O + cellular proteinSide 1 = ADP + phosphate + cellular proteinSide 2.. Its function is as follows. Part of the Sec protein translocase complex. Interacts with the SecYEG preprotein conducting channel. Has a central role in coupling the hydrolysis of ATP to the transfer of proteins into and across the cell membrane, serving as an ATP-driven molecular motor driving the stepwise translocation of polypeptide chains across the membrane. The polypeptide is Protein translocase subunit SecA 1 (Streptococcus gordonii).